The primary structure comprises 317 residues: Glycine--tRNA ligase alpha subunit (317 aa).

It belongs to the class-II aminoacyl-tRNA synthetase family. Tetramer of two alpha and two beta subunits.

The protein resides in the cytoplasm. The catalysed reaction is tRNA(Gly) + glycine + ATP = glycyl-tRNA(Gly) + AMP + diphosphate. This chain is Glycine--tRNA ligase alpha subunit, found in Lactococcus lactis subsp. cremoris (strain SK11).